We begin with the raw amino-acid sequence, 193 residues long: Zinc finger CCHC domain-containing protein 17 (193 aa).

The S1 motif; truncated domain occupies 1–40 (MSSCRVDKPSEIVDVGDKVWVKLIGREMKNDRIKVSLSMK). Ser66 carries the post-translational modification Phosphoserine. A CCHC-type zinc finger spans residues 83 to 100 (TTCKKCGCKGHFAKDCFM). Lys96 carries the N6-acetyllysine modification. A disordered region spans residues 113–193 (EEEEKEEAKS…KKKHKKKHKE (81 aa)). Positions 118–129 (EEAKSAEFEKPV) are enriched in basic and acidic residues. The span at 134-150 (PSRKRKKEKKKKKHRDR) shows a compositional bias: basic residues. Ser135 is subject to Phosphoserine. Basic and acidic residues predominate over residues 163–177 (DTGKRARHTSKDSKA). The span at 178–193 (AKKKKKKKKHKKKHKE) shows a compositional bias: basic residues.

In terms of assembly, may interact with PNN. May associate with the 60 S ribosomal subunit.

Its subcellular location is the nucleus. It is found in the nucleolus. The chain is Zinc finger CCHC domain-containing protein 17 (ZCCHC17) from Macaca fascicularis (Crab-eating macaque).